Consider the following 395-residue polypeptide: HCLS1-binding protein 3 (395 aa).

Residue methionine 1 is modified to N-acetylmethionine. Serine 3 carries the phosphoserine modification. One can recognise a PX domain in the interval glycine 19–alanine 142. Disordered stretches follow at residues threonine 143–phenylalanine 310 and leucine 322–glutamate 374. Positions aspartate 162–aspartate 174 are enriched in acidic residues. Serine 191 is subject to Phosphoserine. The segment covering glycine 194–leucine 206 has biased composition (acidic residues). Basic and acidic residues-rich tracts occupy residues serine 249–leucine 260 and arginine 299–phenylalanine 310. Serine 254 carries the phosphoserine modification. Positions lysine 329–proline 339 are enriched in pro residues. N6-acetyllysine is present on lysine 341.

As to quaternary structure, binds HCLS1. Interacts with the SH3 domain of HCLS1 in vitro. Ubiquitously expressed.

May be a modulator of IL-2 signaling. The polypeptide is HCLS1-binding protein 3 (Hs1bp3) (Mus musculus (Mouse)).